A 368-amino-acid polypeptide reads, in one-letter code: Probable dual-specificity RNA methyltransferase RlmN (368 aa).

Residue E100 is the Proton acceptor of the active site. Residues 106 to 344 (QHYGLSVCVT…CVVRQEHGTD (239 aa)) form the Radical SAM core domain. An intrachain disulfide couples C113 to C349. [4Fe-4S] cluster is bound by residues C120, C124, and C127. Residues 172 to 173 (GE), S204, 227 to 229 (SLH), and N305 contribute to the S-adenosyl-L-methionine site. Catalysis depends on C349, which acts as the S-methylcysteine intermediate.

It belongs to the radical SAM superfamily. RlmN family. [4Fe-4S] cluster serves as cofactor.

It is found in the cytoplasm. The enzyme catalyses adenosine(2503) in 23S rRNA + 2 reduced [2Fe-2S]-[ferredoxin] + 2 S-adenosyl-L-methionine = 2-methyladenosine(2503) in 23S rRNA + 5'-deoxyadenosine + L-methionine + 2 oxidized [2Fe-2S]-[ferredoxin] + S-adenosyl-L-homocysteine. The catalysed reaction is adenosine(37) in tRNA + 2 reduced [2Fe-2S]-[ferredoxin] + 2 S-adenosyl-L-methionine = 2-methyladenosine(37) in tRNA + 5'-deoxyadenosine + L-methionine + 2 oxidized [2Fe-2S]-[ferredoxin] + S-adenosyl-L-homocysteine. Specifically methylates position 2 of adenine 2503 in 23S rRNA and position 2 of adenine 37 in tRNAs. The chain is Probable dual-specificity RNA methyltransferase RlmN from Streptococcus agalactiae serotype Ia (strain ATCC 27591 / A909 / CDC SS700).